Reading from the N-terminus, the 212-residue chain is Ion-translocating oxidoreductase complex subunit G (212 aa).

The chain crosses the membrane as a helical span at residues 9–29; it reads GFLLALFALICTGLVAAVNQQ. Position 176 is an FMN phosphoryl threonine (T176).

Belongs to the RnfG family. The complex is composed of six subunits: RnfA, RnfB, RnfC, RnfD, RnfE and RnfG. The cofactor is FMN.

It localises to the cell inner membrane. In terms of biological role, part of a membrane-bound complex that couples electron transfer with translocation of ions across the membrane. This chain is Ion-translocating oxidoreductase complex subunit G, found in Shewanella baltica (strain OS223).